The sequence spans 194 residues: Leucyl/phenylalanyl-tRNA--protein transferase (194 aa).

The protein belongs to the L/F-transferase family.

It localises to the cytoplasm. The enzyme catalyses N-terminal L-lysyl-[protein] + L-leucyl-tRNA(Leu) = N-terminal L-leucyl-L-lysyl-[protein] + tRNA(Leu) + H(+). It carries out the reaction N-terminal L-arginyl-[protein] + L-leucyl-tRNA(Leu) = N-terminal L-leucyl-L-arginyl-[protein] + tRNA(Leu) + H(+). The catalysed reaction is L-phenylalanyl-tRNA(Phe) + an N-terminal L-alpha-aminoacyl-[protein] = an N-terminal L-phenylalanyl-L-alpha-aminoacyl-[protein] + tRNA(Phe). Functionally, functions in the N-end rule pathway of protein degradation where it conjugates Leu, Phe and, less efficiently, Met from aminoacyl-tRNAs to the N-termini of proteins containing an N-terminal arginine or lysine. The chain is Leucyl/phenylalanyl-tRNA--protein transferase from Chlorobaculum parvum (strain DSM 263 / NCIMB 8327) (Chlorobium vibrioforme subsp. thiosulfatophilum).